The chain runs to 176 residues: Dual-action ribosomal maturation protein DarP (176 aa).

Over residues 1–10 (MTVPNHQQDI) the composition is skewed to polar residues. The disordered stretch occupies residues 1–22 (MTVPNHQQDISDSDLESRPSKT).

It belongs to the DarP family.

It is found in the cytoplasm. Its function is as follows. Member of a network of 50S ribosomal subunit biogenesis factors which assembles along the 30S-50S interface, preventing incorrect 23S rRNA structures from forming. Promotes peptidyl transferase center (PTC) maturation. The protein is Dual-action ribosomal maturation protein DarP of Nitrosomonas eutropha (strain DSM 101675 / C91 / Nm57).